We begin with the raw amino-acid sequence, 349 residues long: Phosphoribosylformylglycinamidine cyclo-ligase (349 aa).

The protein belongs to the AIR synthase family.

The protein resides in the cytoplasm. It carries out the reaction 2-formamido-N(1)-(5-O-phospho-beta-D-ribosyl)acetamidine + ATP = 5-amino-1-(5-phospho-beta-D-ribosyl)imidazole + ADP + phosphate + H(+). It participates in purine metabolism; IMP biosynthesis via de novo pathway; 5-amino-1-(5-phospho-D-ribosyl)imidazole from N(2)-formyl-N(1)-(5-phospho-D-ribosyl)glycinamide: step 2/2. The protein is Phosphoribosylformylglycinamidine cyclo-ligase of Bordetella pertussis (strain Tohama I / ATCC BAA-589 / NCTC 13251).